Here is a 101-residue protein sequence, read N- to C-terminus: Small ribosomal subunit protein bS18c (101 aa).

This sequence belongs to the bacterial ribosomal protein bS18 family. As to quaternary structure, part of the 30S ribosomal subunit.

Its subcellular location is the plastid. The protein resides in the chloroplast. The chain is Small ribosomal subunit protein bS18c from Aethionema cordifolium (Lebanon stonecress).